A 646-amino-acid chain; its full sequence is mRNA 3'-end-processing protein RNA14 (646 aa).

HAT repeat units follow at residues 46–78, 80–114, 128–160, 171–204, 249–281, and 290–322; these read DDYD…SELQ, NEFD…YVRR, VVIK…FLHQ, QRLD…WEQE, ANKN…WEKE, and ALKD…YEFD. Residues 571–599 are disordered; sequence DGDPSGVDKSFKKRQIENDENLPDSKRQK.

The protein resides in the nucleus. Its subcellular location is the cytoplasm. Functionally, component of the cleavage factor IA (CFIA) complex, which is involved in the endonucleolytic cleavage during polyadenylation-dependent pre-mRNA 3'-end formation. This chain is mRNA 3'-end-processing protein RNA14 (RNA14), found in Candida glabrata (strain ATCC 2001 / BCRC 20586 / JCM 3761 / NBRC 0622 / NRRL Y-65 / CBS 138) (Yeast).